The following is a 469-amino-acid chain: Adenosylhomocysteinase (469 aa).

Positions 60, 135, and 195 each coordinate substrate. Position 196–198 (196–198 (TTT)) interacts with NAD(+). Positions 225 and 229 each coordinate substrate. NAD(+) is bound by residues asparagine 230, 259–264 (GYGDVG), glutamate 282, asparagine 317, 338–340 (IGH), and asparagine 383.

This sequence belongs to the adenosylhomocysteinase family. NAD(+) is required as a cofactor.

The protein resides in the cytoplasm. The enzyme catalyses S-adenosyl-L-homocysteine + H2O = L-homocysteine + adenosine. It functions in the pathway amino-acid biosynthesis; L-homocysteine biosynthesis; L-homocysteine from S-adenosyl-L-homocysteine: step 1/1. Its function is as follows. May play a key role in the regulation of the intracellular concentration of adenosylhomocysteine. The sequence is that of Adenosylhomocysteinase from Hyphomonas neptunium (strain ATCC 15444).